The primary structure comprises 514 residues: ATP synthase subunit alpha (514 aa).

Residue 170 to 177 (GDRQIGKT) participates in ATP binding.

Belongs to the ATPase alpha/beta chains family. As to quaternary structure, F-type ATPases have 2 components, CF(1) - the catalytic core - and CF(0) - the membrane proton channel. CF(1) has five subunits: alpha(3), beta(3), gamma(1), delta(1), epsilon(1). CF(0) has three main subunits: a(1), b(2) and c(9-12). The alpha and beta chains form an alternating ring which encloses part of the gamma chain. CF(1) is attached to CF(0) by a central stalk formed by the gamma and epsilon chains, while a peripheral stalk is formed by the delta and b chains.

The protein localises to the cell inner membrane. The enzyme catalyses ATP + H2O + 4 H(+)(in) = ADP + phosphate + 5 H(+)(out). Produces ATP from ADP in the presence of a proton gradient across the membrane. The alpha chain is a regulatory subunit. The sequence is that of ATP synthase subunit alpha from Stutzerimonas stutzeri (strain A1501) (Pseudomonas stutzeri).